The primary structure comprises 315 residues: Manganese-dependent 2,3-dihydroxybiphenyl 1,2-dioxygenase (315 aa).

VOC domains follow at residues Lys-7–Asp-121 and Arg-150–Gly-273. Mn(2+)-binding residues include His-153, His-216, and Glu-269.

The protein belongs to the extradiol ring-cleavage dioxygenase family. As to quaternary structure, homotetramer. It depends on Mn(2+) as a cofactor.

The catalysed reaction is biphenyl-2,3-diol + O2 = 2-hydroxy-6-oxo-6-phenylhexa-2,4-dienoate + H(+). Its pathway is xenobiotic degradation; biphenyl degradation; 2-hydroxy-2,4-pentadienoate and benzoate from biphenyl: step 3/4. Catalyzes the meta-cleavage of the hydroxylated biphenyl ring. The enzyme can oxidize a wide range of substrates, and the substrate preference order is 2,3-dihydroxybiphenyl &gt; 3-methylcatechol &gt; catechol &gt; 4-methylcatechol &gt; 4-chlorocatechol. The protein is Manganese-dependent 2,3-dihydroxybiphenyl 1,2-dioxygenase (bphC) of Geobacillus genomosp. 3.